A 468-amino-acid polypeptide reads, in one-letter code: MRISALEGCRVALWGWGRESRAAYRAFRAAFPKQPLTLFCTIAEATEVQALADPVLSIETEVSVPRLAAFDVVIKSPGISPYSPLAVAATAAGAHFIGGTQLWFAAHADTDGVVPGAVCVTGTKGKSTTTALLAHLLRAAGHCTALAGNIGLPLLELLTPQPAPEYWAIELSSYQTADVAGSGARPALALVLNVFPEHLDWHGGEQRYINDKLSLVTVARPPIALLNAADPRLASLVLPQSDLRWFNQRDGWHVRGQVVYRGEQAVLDTALIPLPGAHNGSNVCAVLATLEALGLNAVALAPAACNFRPLPNRLQFLGERDGILWVNDSISTTPHATLAALDCFLGRRRVAVLVGGYDRGVNWECFAARITRKVPLDIVTMGANGPHIQALLAPLAAGRFGLHAAVDLPHAVALARTALGAQGGVLLLSPGAPSFGAYQDYVERGRHFAILAGFDPEVISSISGLGIA.

122-128 (GTKGKST) contributes to the ATP binding site.

It belongs to the MurCDEF family. MurD2 subfamily.

The protein resides in the cytoplasm. It carries out the reaction UDP-N-acetyl-alpha-D-muramoyl-L-alanine + L-glutamate + ATP = UDP-N-acetyl-alpha-D-muramoyl-L-alanyl-L-glutamate + ADP + phosphate + H(+). The protein operates within cell wall biogenesis; peptidoglycan biosynthesis. Functionally, cell wall formation. Catalyzes the addition of L-glutamate to the nucleotide precursor UDP-N-acetylmuramoyl-L-alanine. The protein is UDP-N-acetylmuramoyl-L-alanine--L-glutamate ligase of Xylella fastidiosa (strain Temecula1 / ATCC 700964).